The following is a 325-amino-acid chain: Methionyl-tRNA formyltransferase (325 aa).

Position 113–116 (113–116 (SLLP)) interacts with (6S)-5,6,7,8-tetrahydrofolate.

This sequence belongs to the Fmt family.

It carries out the reaction L-methionyl-tRNA(fMet) + (6R)-10-formyltetrahydrofolate = N-formyl-L-methionyl-tRNA(fMet) + (6S)-5,6,7,8-tetrahydrofolate + H(+). In terms of biological role, attaches a formyl group to the free amino group of methionyl-tRNA(fMet). The formyl group appears to play a dual role in the initiator identity of N-formylmethionyl-tRNA by promoting its recognition by IF2 and preventing the misappropriation of this tRNA by the elongation apparatus. The sequence is that of Methionyl-tRNA formyltransferase from Chromohalobacter salexigens (strain ATCC BAA-138 / DSM 3043 / CIP 106854 / NCIMB 13768 / 1H11).